Consider the following 748-residue polypeptide: Phosphoenolpyruvate-dependent phosphotransferase system (748 aa).

A GAF domain is found at 1-127 (MLTRLREIVE…RRQLLGVLVV (127 aa)). Residues 128–170 (QQRELRQYDESEESFLVTLATQMAAILSQSQVTALFGQYRQTR) are linker. A PTS EI region spans residues 171–748 (IRALPAAPGV…GMGGLIRGGL (578 aa)). His-356 functions as the Tele-phosphohistidine intermediate in the catalytic mechanism. Phosphoenolpyruvate-binding residues include Arg-462 and Arg-498. Positions 597 and 621 each coordinate Mg(2+). Phosphoenolpyruvate contacts are provided by residues 620 to 621 (ND) and Arg-631. Cys-668 acts as the Proton donor in catalysis.

It belongs to the PEP-utilizing enzyme family. Mg(2+) serves as cofactor.

The protein localises to the cytoplasm. It catalyses the reaction L-histidyl-[protein] + phosphoenolpyruvate = N(pros)-phospho-L-histidyl-[protein] + pyruvate. Its function is as follows. Component of the phosphoenolpyruvate-dependent nitrogen-metabolic phosphotransferase system (nitrogen-metabolic PTS), that seems to be involved in regulating nitrogen metabolism. Enzyme I-Ntr transfers the phosphoryl group from phosphoenolpyruvate (PEP) to the phosphoryl carrier protein (NPr). Could function in the transcriptional regulation of sigma-54 dependent operons in conjunction with the NPr (PtsO) and EIIA-Ntr (PtsN) proteins. Enzyme I-Ntr is specific for NPr. The protein is Phosphoenolpyruvate-dependent phosphotransferase system (ptsP) of Salmonella typhimurium (strain LT2 / SGSC1412 / ATCC 700720).